The chain runs to 157 residues: Small ribosomal subunit protein uS7 (157 aa).

The protein belongs to the universal ribosomal protein uS7 family. As to quaternary structure, part of the 30S ribosomal subunit. Contacts proteins S9 and S11.

In terms of biological role, one of the primary rRNA binding proteins, it binds directly to 16S rRNA where it nucleates assembly of the head domain of the 30S subunit. Is located at the subunit interface close to the decoding center, probably blocks exit of the E-site tRNA. The chain is Small ribosomal subunit protein uS7 from Marinomonas sp. (strain MWYL1).